The following is a 563-amino-acid chain: Solute carrier family 22 member 1 (563 aa).

Topologically, residues 1–21 are cytoplasmic; the sequence is MLTVDDVLEQVGEFGWFQKQT. Residues 22 to 42 form a helical membrane-spanning segment; it reads FLILCLLSAAFAPIYVGIVFL. Over 43-144 the chain is Extracellular; it reads AFTPDHRCRS…LVCDDSWKVD (102 aa). A glycan (N-linked (GlcNAc...) asparagine) is linked at N71. Residues 145–165 traverse the membrane as a helical segment; that stretch reads LFQSCVNLGFFLGSLGVGYIA. Over 166-171 the chain is Cytoplasmic; the sequence is DRFGRK. Residues 172–192 traverse the membrane as a helical segment; sequence VCLLATTLTCASLGVLTAVAP. At 193–196 the chain is on the extracellular side; it reads DYTS. A helical membrane pass occupies residues 197–219; sequence LLIFRLLQGLVSKGSWTAGYTLI. Residues 220 to 232 are Cytoplasmic-facing; the sequence is TEFVGLGYRRTVA. The chain crosses the membrane as a helical span at residues 233-253; the sequence is ILYQMAFTVGLVLLSGLAYIL. Over 254–257 the chain is Extracellular; the sequence is PHWR. A helical membrane pass occupies residues 258–278; that stretch reads WLQLAVSLPIFLLLFRFWFVP. The Proline-rich sequence motif lies at 278–282; that stretch reads PESPR. Topologically, residues 279-342 are cytoplasmic; it reads ESPRWLLSQK…FRTPNLRKYT (64 aa). Position 328 is a phosphoserine (S328). The helical transmembrane segment at 343-363 threads the bilayer; it reads FILMYLWFTSSVVYQGLIMHV. At 364-371 the chain is on the extracellular side; that stretch reads GATGGNLY. The helical transmembrane segment at 372-392 threads the bilayer; the sequence is LDFLYSALVEFPAGFIILVTI. Over 393–398 the chain is Cytoplasmic; it reads DRFGRR. The chain crosses the membrane as a helical span at residues 399–418; sequence YPLATSNLAAGLACFLMIFI. At 419 to 423 the chain is on the extracellular side; the sequence is PHDLP. A helical membrane pass occupies residues 424 to 446; that stretch reads WLNIMVACVGRMGITIVFQMVCL. At 447 to 459 the chain is on the cytoplasmic side; sequence VNAELFPTFIRNL. A helical transmembrane segment spans residues 460–480; the sequence is GMMVCSSLCDLGGVLTPFLVF. At 481–487 the chain is on the extracellular side; sequence RLMEVWQ. A helical membrane pass occupies residues 488-508; that stretch reads GSPLILFAALGLVAGGMTLLL. Residues 509 to 563 lie on the Cytoplasmic side of the membrane; the sequence is PETKGVTLPETIEDAENLQRKAKPKENKIYLQVQTSELNTQAAERDASQGTAQQK.

Belongs to the major facilitator (TC 2.A.1) superfamily. Organic cation transporter (TC 2.A.1.19) family. Post-translationally, phosphorylated.

It is found in the basolateral cell membrane. The protein resides in the apical cell membrane. It localises to the lateral cell membrane. The protein localises to the basal cell membrane. Its subcellular location is the cell membrane. The catalysed reaction is 1-methylnicotinamide(out) = 1-methylnicotinamide(in). The enzyme catalyses dopamine(out) = dopamine(in). It carries out the reaction serotonin(out) = serotonin(in). It catalyses the reaction (R)-adrenaline(out) = (R)-adrenaline(in). The catalysed reaction is (R)-noradrenaline(out) = (R)-noradrenaline(in). The enzyme catalyses histamine(out) = histamine(in). It carries out the reaction guanidine(out) = guanidine(in). It catalyses the reaction choline(out) = choline(in). The catalysed reaction is acetylcholine(in) = acetylcholine(out). The enzyme catalyses thiamine(in) = thiamine(out). It carries out the reaction spermidine(in) = spermidine(out). It catalyses the reaction agmatine(out) = agmatine(in). The catalysed reaction is putrescine(out) = putrescine(in). The enzyme catalyses (R)-carnitine(in) = (R)-carnitine(out). It carries out the reaction O-isobutanoyl-(R)-carnitine(in) = O-isobutanoyl-(R)-carnitine(out). It catalyses the reaction O-acetyl-(R)-carnitine(in) = O-acetyl-(R)-carnitine(out). The catalysed reaction is O-3-hydroxybutanoyl-(R)-carnitine(in) = O-3-hydroxybutanoyl-(R)-carnitine(out). The enzyme catalyses O-propanoyl-(R)-carnitine(in) = O-propanoyl-(R)-carnitine(out). It carries out the reaction O-butanoyl-(R)-carnitine(in) = O-butanoyl-(R)-carnitine(out). It catalyses the reaction O-2-methylbutanoyl-(R)-carnitine(in) = O-2-methylbutanoyl-(R)-carnitine(out). The catalysed reaction is O-3-methylbutanoyl-(R)-carnitine(in) = O-3-methylbutanoyl-(R)-carnitine(out). The enzyme catalyses O-hexanoyl-(R)-carnitine(in) = O-hexanoyl-(R)-carnitine(out). It carries out the reaction L-histidyl-L-proline diketopiperazine(in) = L-histidyl-L-proline diketopiperazine(out). It catalyses the reaction (R)-salsolinol(in) = (R)-salsolinol(out). The catalysed reaction is prostaglandin F2alpha(out) = prostaglandin F2alpha(in). The enzyme catalyses prostaglandin E2(out) = prostaglandin E2(in). With respect to regulation, phosphorylation of the transporter leads to changes in its substrate affinity, resulting in a regulation of the transport activity. In contrast with rat ortholog, ASP uptake is inhibited by protein kinase A (PKA) and C (PKC) activation. ASP uptake is also endogenously activated by calmodulin, the calmodulin-dependent kinase II and LCK tyrosine kinase. Inhibited by cGMP, most likely through a cGMP-binding protein that interacts with OCT1. Its function is as follows. Electrogenic voltage-dependent transporter that mediates the transport of a variety of organic cations such as endogenous bioactive amines, cationic drugs and xenobiotics. Functions as a pH- and Na(+)-independent, bidirectional transporter. Cation cellular uptake or release is driven by the electrochemical potential (i.e. membrane potential and concentration gradient) and substrate selectivity. Hydrophobicity is a major requirement for recognition in polyvalent substrates and inhibitors. Primarily expressed in the basolateral membrane of hepatocytes and proximal tubules and involved in the uptake and disposition of cationic compounds from the blood by hepatic and renal clearance. Most likely functions as an uptake carrier in enterocytes contributing to the intestinal elimination of organic cations from the systemic circulation. Transports endogenous monoamines such as N-1-methylnicotinamide (NMN), guanidine, neurotransmitters dopamine, serotonin, noradrenaline, adrenaline and histamine, and quaternary ammonium compound such as choline. Also transports natural polyamines such as spermidine, agmatine and putrescine at low affinity, but relatively high turnover. Involved in the hepatic and intestinal uptake of the vitamin B1/thiamine, hence regulating hepatic lipid and energy metabolism. Contributes to the influx and efflux of fatty acid carriers carnitines and acylcarnitines across the basolateral membrane of hepatocytes, from the liver to the systemic circulation and inversely and may be involved in regulating the systemic availability of hepatic acylcarnitines. Also capable of transporting non-amine endogenous compounds such as prostaglandin E2 (PGE2) and prostaglandin F2-alpha (PGF2-alpha). May contribute to the transport of cationic compounds in testes across the blood-testis-barrier. Also mediates the uptake of xenobiotics tributylmethylammonium (TBuMA), quinidine, N-methyl-quinine (NMQ), N-methyl-quinidine (NMQD) N-(4,4-azo-n-pentyl)-quinuclidine (APQ), azidoprocainamide methoiodide (AMP), N-(4,4-azo-n-pentyl)-21-deoxyajmalinium (APDA) and 4-(4-(dimethylamino)styryl)-N-methylpyridinium (ASP). The polypeptide is Solute carrier family 22 member 1 (SLC22A1) (Bos taurus (Bovine)).